A 20-amino-acid chain; its full sequence is Thrombin-like enzyme Cdc SII (20 aa).

This sequence belongs to the peptidase S1 family. Snake venom subfamily. Monomer. In terms of tissue distribution, expressed by the venom gland.

It is found in the secreted. Its activity is regulated as follows. Strongly inhibited by PMSF and moderately inhibited by leupeptin. Not inhibited by EDTA, aprotinin, pepstatin, and bestatin. In terms of biological role, thrombin-like snake venom serine protease that coagulates human plasma and bovine fibrinogen by hydrolysis of the alpha chains (FGA) (minimum coagulation dose is 60 ug on fibrinogen). Has fibrinogenolytic activities, and degrades preferentially the Aalpha chain (FGA). Shows amidolytic activity toward N-benzoyl-L-Arg-p-nitroanilide, has a higher activity than Cdc SI. In vivo, intravenous injection induces defibrin(ogen)ation and a loss of the righting reflex and opisthotoxins, together with a typical gyroxin-like effect (18-20 minutes). Subcutaneous injection into the footpads induces moderate edema. Potentiates local hemorrhagic activity induced by metalloproteinases (BaP1). In Crotalus durissus cumanensis (South American rattlesnake), this protein is Thrombin-like enzyme Cdc SII.